Reading from the N-terminus, the 134-residue chain is Large ribosomal subunit protein bL17 (134 aa).

This sequence belongs to the bacterial ribosomal protein bL17 family. In terms of assembly, part of the 50S ribosomal subunit. Contacts protein L32.

The polypeptide is Large ribosomal subunit protein bL17 (Thioalkalivibrio sulfidiphilus (strain HL-EbGR7)).